Consider the following 204-residue polypeptide: Peptidyl-tRNA hydrolase (204 aa).

Tyr14 is a tRNA binding site. His19 serves as the catalytic Proton acceptor. TRNA-binding residues include Tyr64, Asn66, and Asn112.

This sequence belongs to the PTH family. As to quaternary structure, monomer.

The protein resides in the cytoplasm. It catalyses the reaction an N-acyl-L-alpha-aminoacyl-tRNA + H2O = an N-acyl-L-amino acid + a tRNA + H(+). Functionally, hydrolyzes ribosome-free peptidyl-tRNAs (with 1 or more amino acids incorporated), which drop off the ribosome during protein synthesis, or as a result of ribosome stalling. Catalyzes the release of premature peptidyl moieties from peptidyl-tRNA molecules trapped in stalled 50S ribosomal subunits, and thus maintains levels of free tRNAs and 50S ribosomes. The sequence is that of Peptidyl-tRNA hydrolase from Nitrobacter hamburgensis (strain DSM 10229 / NCIMB 13809 / X14).